The chain runs to 1595 residues: Pentafunctional AROM polypeptide (1595 aa).

The 3-dehydroquinate synthase stretch occupies residues 1–384 (MGVPTKISIL…HEPRASTVSN (384 aa)). NAD(+) is bound by residues 44-46 (DTN), 81-84 (ESSK), 114-116 (GGV), and Asp119. 7-phospho-2-dehydro-3-deoxy-D-arabino-heptonate is bound at residue Arg130. 139–140 (TT) contacts NAD(+). The 7-phospho-2-dehydro-3-deoxy-D-arabino-heptonate site is built by Asp146 and Lys152. Residue Lys161 coordinates NAD(+). 7-phospho-2-dehydro-3-deoxy-D-arabino-heptonate is bound at residue Asn162. NAD(+) contacts are provided by residues 179–182 (FLNT) and Asn190. Residue Glu194 participates in Zn(2+) binding. 7-phospho-2-dehydro-3-deoxy-D-arabino-heptonate is bound by residues 194-197 (EVIK) and Lys250. The active-site Proton acceptor; for 3-dehydroquinate synthase activity is the Glu260. 7-phospho-2-dehydro-3-deoxy-D-arabino-heptonate is bound by residues 264–268 (RNLLN) and His271. Position 271 (His271) interacts with Zn(2+). His275 functions as the Proton acceptor; for 3-dehydroquinate synthase activity in the catalytic mechanism. 7-phospho-2-dehydro-3-deoxy-D-arabino-heptonate is bound by residues His287 and Lys356. His287 contributes to the Zn(2+) binding site. The tract at residues 397–842 (VSPGVPKGLD…WDSLAQTFKV (446 aa)) is EPSP synthase. The active-site For EPSP synthase activity is the Cys824. The tract at residues 866–1057 (ASIFIIGMRG…RRKENTFFVS (192 aa)) is shikimate kinase. 872-879 (GMRGAGKT) contacts ATP. Residues 1058 to 1278 (LTLPDLSLAA…AAPGQLSARE (221 aa)) are 3-dehydroquinase. Catalysis depends on His1181, which acts as the Proton acceptor; for 3-dehydroquinate dehydratase activity. The active-site Schiff-base intermediate with substrate; for 3-dehydroquinate dehydratase activity is the Lys1209. A shikimate dehydrogenase region spans residues 1291 to 1595 (AKKFAVIGNP…MGVSPSEDIL (305 aa)).

The protein in the N-terminal section; belongs to the sugar phosphate cyclases superfamily. Dehydroquinate synthase family. It in the 2nd section; belongs to the EPSP synthase family. This sequence in the 3rd section; belongs to the shikimate kinase family. In the 4th section; belongs to the type-I 3-dehydroquinase family. The protein in the C-terminal section; belongs to the shikimate dehydrogenase family. In terms of assembly, homodimer. It depends on Zn(2+) as a cofactor.

Its subcellular location is the cytoplasm. It catalyses the reaction 7-phospho-2-dehydro-3-deoxy-D-arabino-heptonate = 3-dehydroquinate + phosphate. The enzyme catalyses 3-dehydroquinate = 3-dehydroshikimate + H2O. It carries out the reaction shikimate + NADP(+) = 3-dehydroshikimate + NADPH + H(+). The catalysed reaction is shikimate + ATP = 3-phosphoshikimate + ADP + H(+). It catalyses the reaction 3-phosphoshikimate + phosphoenolpyruvate = 5-O-(1-carboxyvinyl)-3-phosphoshikimate + phosphate. Its pathway is metabolic intermediate biosynthesis; chorismate biosynthesis; chorismate from D-erythrose 4-phosphate and phosphoenolpyruvate: step 2/7. It functions in the pathway metabolic intermediate biosynthesis; chorismate biosynthesis; chorismate from D-erythrose 4-phosphate and phosphoenolpyruvate: step 3/7. It participates in metabolic intermediate biosynthesis; chorismate biosynthesis; chorismate from D-erythrose 4-phosphate and phosphoenolpyruvate: step 4/7. The protein operates within metabolic intermediate biosynthesis; chorismate biosynthesis; chorismate from D-erythrose 4-phosphate and phosphoenolpyruvate: step 5/7. Its pathway is metabolic intermediate biosynthesis; chorismate biosynthesis; chorismate from D-erythrose 4-phosphate and phosphoenolpyruvate: step 6/7. In terms of biological role, the AROM polypeptide catalyzes 5 consecutive enzymatic reactions in prechorismate polyaromatic amino acid biosynthesis. The sequence is that of Pentafunctional AROM polypeptide from Ajellomyces capsulatus (strain G186AR / H82 / ATCC MYA-2454 / RMSCC 2432) (Darling's disease fungus).